The primary structure comprises 246 residues: Small ribosomal subunit protein uS2 (246 aa).

It belongs to the universal ribosomal protein uS2 family.

The polypeptide is Small ribosomal subunit protein uS2 (Burkholderia vietnamiensis (strain G4 / LMG 22486) (Burkholderia cepacia (strain R1808))).